A 285-amino-acid chain; its full sequence is MQLIEKAPAKINLSLDALYQHTDGEFEWQMIMTSIDLADYVQITLQDSPQIEVRTSKGYLPEDKRNLAYQAAQLLRHRFDIKTGAIIEIDKHIPVAAGLGGGSSDAAAVLRGLNQLWHLGLTEAELAHIGLSIDSDVPYCVYSETALVTGKGDQIQPLGDLPNFWMVVVKPEVSVSTPRILHALNCDQITDRPQTDRLLAGIQQQDAQQMTAAMANVLTPITNQRYPQIDYLMQRLTAFGAEKAQMSGSGPTVFGICRQYSRAQRIYNSMSGFCREVYLVQPLKK.

K10 is a catalytic residue. 94–104 (PVAAGLGGGSS) provides a ligand contact to ATP. Residue D136 is part of the active site.

It belongs to the GHMP kinase family. IspE subfamily.

The enzyme catalyses 4-CDP-2-C-methyl-D-erythritol + ATP = 4-CDP-2-C-methyl-D-erythritol 2-phosphate + ADP + H(+). It functions in the pathway isoprenoid biosynthesis; isopentenyl diphosphate biosynthesis via DXP pathway; isopentenyl diphosphate from 1-deoxy-D-xylulose 5-phosphate: step 3/6. Functionally, catalyzes the phosphorylation of the position 2 hydroxy group of 4-diphosphocytidyl-2C-methyl-D-erythritol. This is 4-diphosphocytidyl-2-C-methyl-D-erythritol kinase from Latilactobacillus sakei subsp. sakei (strain 23K) (Lactobacillus sakei subsp. sakei).